Reading from the N-terminus, the 395-residue chain is 1-deoxy-D-xylulose 5-phosphate reductoisomerase (395 aa).

6 residues coordinate NADPH: T10, G11, S12, I13, K37, and N123. Residue K124 coordinates 1-deoxy-D-xylulose 5-phosphate. Residue E125 coordinates NADPH. D149 provides a ligand contact to Mn(2+). The 1-deoxy-D-xylulose 5-phosphate site is built by S150, E151, S185, and H208. E151 lines the Mn(2+) pocket. G214 is an NADPH binding site. 1-deoxy-D-xylulose 5-phosphate contacts are provided by S221, N226, K227, and E230. E230 lines the Mn(2+) pocket.

The protein belongs to the DXR family. Mg(2+) serves as cofactor. Requires Mn(2+) as cofactor.

The enzyme catalyses 2-C-methyl-D-erythritol 4-phosphate + NADP(+) = 1-deoxy-D-xylulose 5-phosphate + NADPH + H(+). It functions in the pathway isoprenoid biosynthesis; isopentenyl diphosphate biosynthesis via DXP pathway; isopentenyl diphosphate from 1-deoxy-D-xylulose 5-phosphate: step 1/6. Catalyzes the NADPH-dependent rearrangement and reduction of 1-deoxy-D-xylulose-5-phosphate (DXP) to 2-C-methyl-D-erythritol 4-phosphate (MEP). In Shewanella loihica (strain ATCC BAA-1088 / PV-4), this protein is 1-deoxy-D-xylulose 5-phosphate reductoisomerase.